A 789-amino-acid chain; its full sequence is Glycerol-3-phosphate acyltransferase (789 aa).

An HXXXXD motif motif is present at residues 275-280 (SHRSYI).

This sequence belongs to the GPAT/DAPAT family.

It is found in the cell membrane. The enzyme catalyses sn-glycerol 3-phosphate + an acyl-CoA = a 1-acyl-sn-glycero-3-phosphate + CoA. The protein operates within phospholipid metabolism; CDP-diacylglycerol biosynthesis; CDP-diacylglycerol from sn-glycerol 3-phosphate: step 1/3. This Mycobacterium tuberculosis (strain ATCC 25177 / H37Ra) protein is Glycerol-3-phosphate acyltransferase.